The primary structure comprises 258 residues: Short-chain dehydrogenase chyC (258 aa).

Residues Arg37, Asp55, Asn81, Tyr154, Lys158, Val185, and Thr187 each contribute to the NADP(+) site. The Proton donor role is filled by Tyr154. Catalysis depends on Lys158, which acts as the Lowers pKa of active site Tyr.

This sequence belongs to the short-chain dehydrogenases/reductases (SDR) family.

Short-chain dehydrogenase; part of the gene cluster that mediates the biosynthesis of the yellow pigment chrysogine. the NRPS chyA mediates the condensation of anthranilic acid and alanine into the intermediate 2-(2-aminopropanamido)benzoic acid. The remainder of the pathway is highly branched yielding at least 13 chrysogine-related compounds. The malonyl transferase chyE converts 2-(2-aminopropanamido)benzoic acid and 2-(2-aminopropanamido)benzamidine into 2-(2-(2-carboxyacetamido)propanamido)benzoic acid and 3-((1-((2-carbamoylphenyl)amino)-1-oxopropan-2-yl)amino)-3-oxopropanoic acid, respectively. ChyD is an amidase, being responsible for the amidation of the carboxylic acid moiety of 2-(2-aminopropanamido)benzoic acid, 2-(2-(2-carboxyacetamido)propanamido)benzoic acid and 2-(2-((4-amino-1-carboxy-4-oxobutyl)amino)propanamido)benzoic acid. ChyC is involved in the same reactions as ChyD, but plays a more minor role in the amidation reactions compared to chyD. The oxidoreductases chyH and chyM are involved in oxidation reactions that form N-pyruvoylanthranilamide from 2-(2-aminopropanamido)benzamidine and (1-((2-carbamoylphenyl)amino)-1-oxopropan-2-yl)glutamine, respectively. N-pyruvoylanthranilamide is further converted via two further branches in the pathway, yielding chrysogine and additional chrysogine-related coumpounds. Chrysogine is likely formed by a spontaneous ring closure from N-pyruvoylanthranilamide. This is Short-chain dehydrogenase chyC from Penicillium rubens (strain ATCC 28089 / DSM 1075 / NRRL 1951 / Wisconsin 54-1255) (Penicillium chrysogenum).